Consider the following 167-residue polypeptide: Ribosome maturation factor RimM (167 aa).

Residues 94-165 (ENEYYYSDII…KIIITPMEGL (72 aa)) form the PRC barrel domain.

The protein belongs to the RimM family. As to quaternary structure, binds ribosomal protein uS19.

Its subcellular location is the cytoplasm. In terms of biological role, an accessory protein needed during the final step in the assembly of 30S ribosomal subunit, possibly for assembly of the head region. Essential for efficient processing of 16S rRNA. May be needed both before and after RbfA during the maturation of 16S rRNA. It has affinity for free ribosomal 30S subunits but not for 70S ribosomes. The protein is Ribosome maturation factor RimM of Staphylococcus aureus (strain bovine RF122 / ET3-1).